We begin with the raw amino-acid sequence, 365 residues long: Aminomethyltransferase (365 aa).

It belongs to the GcvT family. In terms of assembly, the glycine cleavage system is composed of four proteins: P, T, L and H.

It catalyses the reaction N(6)-[(R)-S(8)-aminomethyldihydrolipoyl]-L-lysyl-[protein] + (6S)-5,6,7,8-tetrahydrofolate = N(6)-[(R)-dihydrolipoyl]-L-lysyl-[protein] + (6R)-5,10-methylene-5,6,7,8-tetrahydrofolate + NH4(+). The glycine cleavage system catalyzes the degradation of glycine. This chain is Aminomethyltransferase, found in Chlorobaculum parvum (strain DSM 263 / NCIMB 8327) (Chlorobium vibrioforme subsp. thiosulfatophilum).